The primary structure comprises 127 residues: Major sperm protein 2 (127 aa).

Residue alanine 2 is modified to N-acetylalanine. Positions 9–126 constitute an MSP domain; that stretch reads DIHTQPGSKI…RRKNLPIEYN (118 aa).

Sperm.

The protein resides in the cell projection. Its subcellular location is the pseudopodium. It localises to the cytoplasm. The protein localises to the cytoskeleton. In terms of biological role, central component in molecular interactions underlying sperm crawling. Forms an extensive filament system that extends from sperm villipoda, along the leading edge of the pseudopod. This Onchocerca volvulus protein is Major sperm protein 2.